Here is a 42-residue protein sequence, read N- to C-terminus: Photosystem II reaction center protein J (42 aa).

A helical transmembrane segment spans residues 10-30 (IPLWLVGTVVGIAALTLLSVF).

This sequence belongs to the PsbJ family. In terms of assembly, PSII is composed of 1 copy each of membrane proteins PsbA, PsbB, PsbC, PsbD, PsbE, PsbF, PsbH, PsbI, PsbJ, PsbK, PsbL, PsbM, PsbT, PsbX, PsbY, PsbZ, Psb30/Ycf12, at least 3 peripheral proteins of the oxygen-evolving complex and a large number of cofactors. It forms dimeric complexes.

It is found in the plastid. Its subcellular location is the chloroplast thylakoid membrane. Functionally, one of the components of the core complex of photosystem II (PSII). PSII is a light-driven water:plastoquinone oxidoreductase that uses light energy to abstract electrons from H(2)O, generating O(2) and a proton gradient subsequently used for ATP formation. It consists of a core antenna complex that captures photons, and an electron transfer chain that converts photonic excitation into a charge separation. This Tupiella akineta (Green alga) protein is Photosystem II reaction center protein J.